Here is a 766-residue protein sequence, read N- to C-terminus: Coenzyme PQQ synthesis protein F (766 aa).

Zn(2+) is bound at residue His-49. Glu-52 acts as the Proton acceptor in catalysis. His-53 and Glu-130 together coordinate Zn(2+).

Belongs to the peptidase M16 family. Requires Zn(2+) as cofactor.

Its pathway is cofactor biosynthesis; pyrroloquinoline quinone biosynthesis. Functionally, required for coenzyme pyrroloquinoline quinone (PQQ) biosynthesis. It is thought that this protein is a protease that cleaves peptides bond in a small peptide (gene pqqA), providing the glutamate and tyrosine residues which are necessary for the synthesis of PQQ. The sequence is that of Coenzyme PQQ synthesis protein F (pqqF) from Pseudomonas putida (strain ATCC 47054 / DSM 6125 / CFBP 8728 / NCIMB 11950 / KT2440).